The sequence spans 488 residues: MTNPHFAWLPPEINSALMFAGPGAGPLLAAAAAWGGLAEELASAVSSFSSVTSELTSGSWLGPSAAAMMAVATQYMAWLGAAAAQAEQAAAQAAVTAGAFESALAATVQPAVVTANRGLMQVLAATNWLGFNTPAIMDIEAAYEQMWALDVAAMAAYHAEASAAASALAPWKQVLRNLGIDIGKNGQINLGFGNSGTGNVGNNNVGNNNWGSGNTGSSNVGTGNTGSSNIGSGNTGNSNVGLGNLGSGNVGFGNTGNGDFGFGLTGDHQFGFGGFNSGSGNVGIGNSGTGNVGFFNSGNGNMGIGNSGSLNSGLGNSGSMSTGFGTASMSSGMWQSMHGSDMASSTSLASSATYATGGTATLSSGILSSALAHTGGLNPALAGGLTPTAATPAAAAPAAAAPVAAAAADAGPVSAGANSGSTAGAGLRSPAAGYSGLYNSANSDAGARSVATREAPANAGAGIPRSSFYPNRETADSEADIQLPLRTE.

Disordered regions lie at residues 207-232 and 443-488; these read NNNWGSGNTGSSNVGTGNTGSSNIGS and SDAG…LRTE.

It belongs to the mycobacterial PPE family.

The protein resides in the secreted. In terms of biological role, plays a major role in the integrity and stability of the capsule. This is PPE family protein PPE10 from Mycobacterium marinum (strain ATCC BAA-535 / M).